We begin with the raw amino-acid sequence, 410 residues long: Elongation factor Tu (410 aa).

A tr-type G domain is found at 10–214; the sequence is KPHVNIGTIG…EVDAYIPTPE (205 aa). The G1 stretch occupies residues 19 to 26; the sequence is GHVDHGKT. Position 19–26 (19–26) interacts with GTP; it reads GHVDHGKT. Mg(2+) is bound at residue T26. A G2 region spans residues 60–64; the sequence is GITIN. Residues 81 to 84 are G3; that stretch reads DCPG. Residues 81-85 and 136-139 each bind GTP; these read DCPGH and NKAD. The segment at 136 to 139 is G4; that stretch reads NKAD. The segment at 174 to 176 is G5; the sequence is SAL.

This sequence belongs to the TRAFAC class translation factor GTPase superfamily. Classic translation factor GTPase family. EF-Tu/EF-1A subfamily. In terms of assembly, monomer.

Its subcellular location is the cytoplasm. It catalyses the reaction GTP + H2O = GDP + phosphate + H(+). Its function is as follows. GTP hydrolase that promotes the GTP-dependent binding of aminoacyl-tRNA to the A-site of ribosomes during protein biosynthesis. The chain is Elongation factor Tu from Arthrospira platensis (Spirulina platensis).